Here is a 343-residue protein sequence, read N- to C-terminus: Transmembrane protein 120A (343 aa).

Residues 1–132 are Cytoplasmic-facing; that stretch reads MHPPPPGPLG…KQAKFAYKDE (132 aa). Residue Lys130 coordinates CoA. The chain crosses the membrane as a helical span at residues 133–152; the sequence is YEKFKLYLTIILILISFTCR. The Extracellular segment spans residues 153–158; that stretch reads FLLNSR. Residues 159–177 form a helical membrane-spanning segment; the sequence is VTDAAFNFLLVWYYCTLTI. The Cytoplasmic portion of the chain corresponds to 178 to 190; it reads RESILINNGSRIK. CoA-binding residues include Ser187 and Arg188. The chain crosses the membrane as a helical span at residues 191–209; sequence GWWVFHHYVSTFLSGVMLT. Residues 210 to 218 are Extracellular-facing; that stretch reads WPDGLMYQK. Residues 219–240 form a helical membrane-spanning segment; that stretch reads FRNQFLSFSMYQSFVQFLQYYY. CoA contacts are provided by Gln237, Tyr240, Gln241, and His283. At 241–270 the chain is on the cytoplasmic side; sequence QSGCLYRLRALGERHTMDLTVEGFQSWMWR. A helical transmembrane segment spans residues 271 to 294; the sequence is GLTFLLPFLFFGHFWQLFNALTLF. Over 295–304 the chain is Extracellular; that stretch reads NLARDPECKE. Residues 305 to 330 form a helical membrane-spanning segment; the sequence is WQVLMCGFPFLLLFLGNFFTTLRVVH. Over 331–343 the chain is Cytoplasmic; it reads QKFHNQLHGSKKE. Position 332 (Lys332) interacts with CoA.

This sequence belongs to the TMEM120 family. In terms of assembly, homodimer. Forms heterooligomer with TMEM120B. Interacts with PKD2; TMEM120A inhibits PKD2 channel activity through the physical association of PKD2 with TMEM120A.

Its subcellular location is the cell membrane. It is found in the nucleus inner membrane. The protein resides in the endoplasmic reticulum. Functionally, multifunctional protein involved in mechanosensation, and plays an essential role in lipid metabolism and adipocyte differentiation. May function as an ion channel involved in sensing mechanical stimuli. Mediates the mechanosensitivity of the PKD2-TMEM120A channel complex through direct physical interaction. TMEM120A seems to affect mechanosensation by inhibiting PIEZO2 channels, possibly by altering cellular lipid content. TMEM120A is structurally similar to a lipid-modifying enzyme, ELOVL7, and contains a bound coenzyme A molecule, which suggests it might function as an enzyme in lipid metabolism. Additionnaly, implicated in innate immune response against Zika virus. Acts as a key activator of the antiviral signaling involving STING1. In Bos taurus (Bovine), this protein is Transmembrane protein 120A.